A 406-amino-acid polypeptide reads, in one-letter code: ESX-5 secretion system protein EccE5 (406 aa).

A run of 2 helical transmembrane segments spans residues 9-29 and 43-63; these read LALS…ILAV and VAWW…VVSY.

It belongs to the EccE family. As to quaternary structure, part of the ESX-5 / type VII secretion system (T7SS), which is composed of cytosolic and membrane components. The ESX-5 membrane complex is composed of EccB5, EccC5, EccD5 and EccE5.

The protein localises to the cell inner membrane. Part of the ESX-5 specialized secretion system, which is responsible for the secretion of EsxN and a number of PE_PGRS and PPE proteins, including PPE41. This chain is ESX-5 secretion system protein EccE5, found in Mycobacterium tuberculosis (strain ATCC 25618 / H37Rv).